The chain runs to 866 residues: Protein mono-ADP-ribosyltransferase PARP9 (866 aa).

A Phosphoserine modification is found at S42. Macro domains lie at 109–298 and 313–492; these read QRVF…ESIL and ASTM…TKRS. The 219-residue stretch at 635-853 folds into the PARP catalytic domain; the sequence is TNQQEKLDKM…YSSGPGMVSS (219 aa).

It belongs to the ARTD/PARP family. Forms a stable complex with E3 ligase DTX3L; the interaction is required for PARP9 mediated ADP-ribosylation of ubiquitin. Interacts (via PARP catalytic domain) with DTX3L (via N-terminus). Forms a complex with STAT1 and DTX3L independently of IFNB1 or IFNG-mediated STAT1 'Tyr-701' phosphorylation. Forms a complex with STAT1, DTX3L and histone H2B H2BC9/H2BJ; the interaction is likely to induce H2BC9/H2BJ ubiquitination. Interacts (via N-terminus) with STAT1. Interacts with PARP14 in IFNG-stimulated macrophages; the interaction prevents PARP14-mediated STAT1 and STAT6 ADP-riboslylation. Interacts with PARP1 (when poly-ADP-ribosylated). In terms of processing, ADP-ribosylated by PARP14. Highly expressed in the thymus and intestine. Expressed in macrophages.

It is found in the cytoplasm. Its subcellular location is the cytosol. The protein resides in the nucleus. The enzyme catalyses [protein]-C-terminal glycine + NAD(+) = [protein]-C-terminal O-(ADP-D-ribosyl)-glycine + nicotinamide. Its activity is regulated as follows. Binding to poly(ADP-ribose) does not affect its activity. ADP-ribosyltransferase which, in association with E3 ligase DTX3L, plays a role in DNA damage repair and in immune responses including interferon-mediated antiviral defenses. Within the complex, enhances DTX3L E3 ligase activity which is further enhanced by PARP9 binding to poly(ADP-ribose). In addition, positively regulates DTXL3 protein levels. In association with DTX3L and in presence of E1 and E2 enzymes, mediates NAD(+)-dependent mono-ADP-ribosylation of ubiquitin which prevents ubiquitin conjugation to substrates such as histones. During DNA repair, PARP1 recruits PARP9/BAL1-DTX3L complex to DNA damage sites via PARP9 binding to ribosylated PARP1. Subsequent PARP1-dependent PARP9/BAL1-DTX3L-mediated ubiquitination promotes the rapid and specific recruitment of 53BP1/TP53BP1, UIMC1/RAP80, and BRCA1 to DNA damage sites. In response to DNA damage, PARP9-DTX3L complex is required for efficient non-homologous end joining (NHEJ) but the complex function is restrained by PARP9 activity. Dispensable for B-cell receptor (BCR) assembly through V(D)J recombination and class switch recombination (CSR). In macrophages, positively regulates pro-inflammatory cytokines production in response to IFNG stimulation by suppressing PARP14-mediated STAT1 ADP-ribosylation and thus promoting STAT1 phosphorylation. Also suppresses PARP14-mediated STAT6 ADP-ribosylation. The polypeptide is Protein mono-ADP-ribosyltransferase PARP9 (Parp9) (Mus musculus (Mouse)).